The sequence spans 614 residues: Probable LRR receptor-like serine/threonine-protein kinase At5g63710 (614 aa).

Residues 1–50 (MAHSGNGESFHDPLRGFIQRNCFRWNNQKLILQCFMALAFVGITSSTTQP) form the signal peptide. The Extracellular segment spans residues 51–224 (DIEGGALLQL…VTSSKKKLRD (174 aa)). Asn-65, Asn-125, Asn-146, and Asn-175 each carry an N-linked (GlcNAc...) asparagine glycan. 3 LRR repeats span residues 115 to 139 (LKFLVTLELQNNSLSGALPDSLGNM), 141 to 163 (NLQTLNLSVNSFSGSIPASWSQL), and 164 to 187 (SNLKHLDLSSNNLTGSIPTQFFSI). The chain crosses the membrane as a helical span at residues 225-245 (ITLTASCVASIILFLGAMVMY). Over 246 to 613 (HHHRVRRTKY…DQESIRLSTA (368 aa)) the chain is Cytoplasmic. Thr-286 bears the Phosphothreonine mark. The 285-residue stretch at 289–573 (FNESNLIGQG…GTGGLAEKWT (285 aa)) folds into the Protein kinase domain. Residue 295 to 303 (IGQGGFGKV) coordinates ATP. The residue at position 312 (Thr-312) is a Phosphothreonine. ATP is bound at residue Lys-317. At Ser-370 the chain carries Phosphoserine. At Thr-389 the chain carries Phosphothreonine. The Proton acceptor role is filled by Asp-416. Residues Thr-449, Thr-450, and Thr-455 each carry the phosphothreonine modification. Residue Tyr-463 is modified to Phosphotyrosine. Thr-466 is modified (phosphothreonine). A Phosphoserine modification is found at Ser-470. At Thr-545 the chain carries Phosphothreonine.

This sequence belongs to the protein kinase superfamily. Ser/Thr protein kinase family.

The protein resides in the cell membrane. It carries out the reaction L-seryl-[protein] + ATP = O-phospho-L-seryl-[protein] + ADP + H(+). The catalysed reaction is L-threonyl-[protein] + ATP = O-phospho-L-threonyl-[protein] + ADP + H(+). The sequence is that of Probable LRR receptor-like serine/threonine-protein kinase At5g63710 from Arabidopsis thaliana (Mouse-ear cress).